The sequence spans 209 residues: MTRQCNCSEGSCGSGRYEELVLERMLYSARLKETVARRDSDVIAAMATMIAETFRNGGKVLLCGNGGSAADAQHLAAELTIRYRSSVNRPALPAIALSTDTSALTAGANDLGFDEVFSRLTEAYGRPGDLLLGLSTSGNSPNVLKALQTARKLGLKTLALLGGDGGTIRPHADLAVVVPHTGSADRTQECHIAIGHVIVELVESMMGYA.

In terms of domain architecture, SIS spans 50 to 209; sequence IAETFRNGGK…ELVESMMGYA (160 aa). Residue 65–67 participates in substrate binding; that stretch reads NGG. Positions 74 and 78 each coordinate Zn(2+). Substrate contacts are provided by residues Glu78, 109–110, 135–137, Ser140, and Gln188; these read ND and STS. Gln188 and His196 together coordinate Zn(2+).

The protein belongs to the SIS family. GmhA subfamily. Zn(2+) is required as a cofactor.

Its subcellular location is the cytoplasm. The enzyme catalyses 2 D-sedoheptulose 7-phosphate = D-glycero-alpha-D-manno-heptose 7-phosphate + D-glycero-beta-D-manno-heptose 7-phosphate. It participates in carbohydrate biosynthesis; D-glycero-D-manno-heptose 7-phosphate biosynthesis; D-glycero-alpha-D-manno-heptose 7-phosphate and D-glycero-beta-D-manno-heptose 7-phosphate from sedoheptulose 7-phosphate: step 1/1. Its function is as follows. Catalyzes the isomerization of sedoheptulose 7-phosphate in D-glycero-D-manno-heptose 7-phosphate. This chain is Phosphoheptose isomerase, found in Chlorobaculum parvum (strain DSM 263 / NCIMB 8327) (Chlorobium vibrioforme subsp. thiosulfatophilum).